A 357-amino-acid polypeptide reads, in one-letter code: MPQTLHVHSRVKDYDILFTDHVLKTLADCLGERKQRKLLFITDQTVYHLYQTLFEEFAQQYNAFVHVYPSGGQSKSLERVSAIYDQLIAENFSKKDMIVTIGGGVVGDLGGFVAATYYRGIPYIQIPTTLLSQVDSSIGGKVGVHFKGLTNMIGSIYPPEAIIISTTFLETLPQREFSCGISEMLKIGFIHDRPLFQQLRDFQKETDKQGLERLIYQSISNKKRIVEQDEFENGLRMSLNFGHTLGHAIESLCHHDFYHHGEAIAIGMVVDAKLAVSKGLLPKEDLDSLLQVFERYQLPTTLERADVSATSLFDVFKTDKKNSEQHIIFILPTETGFTTLAINKDDHQFVEKLDSLL.

NAD(+)-binding positions include 104-108, 128-129, lysine 141, and 168-171; these read GVVGD, TT, and FLET. Residues glutamate 183, histidine 243, and histidine 260 each contribute to the Zn(2+) site.

Belongs to the sugar phosphate cyclases superfamily. Dehydroquinate synthase family. The cofactor is NAD(+). It depends on Co(2+) as a cofactor. Requires Zn(2+) as cofactor.

Its subcellular location is the cytoplasm. It carries out the reaction 7-phospho-2-dehydro-3-deoxy-D-arabino-heptonate = 3-dehydroquinate + phosphate. Its pathway is metabolic intermediate biosynthesis; chorismate biosynthesis; chorismate from D-erythrose 4-phosphate and phosphoenolpyruvate: step 2/7. Catalyzes the conversion of 3-deoxy-D-arabino-heptulosonate 7-phosphate (DAHP) to dehydroquinate (DHQ). In Streptococcus pyogenes serotype M3 (strain ATCC BAA-595 / MGAS315), this protein is 3-dehydroquinate synthase.